The primary structure comprises 76 residues: MDSTNARSGMKSRKKKPKTTVIDEDDCMTCSVCQSKLVKISDITKVSLDYINTMRGNTLACTACGSSLKLLNDFAS.

Belongs to the orthopoxvirus OPG146 family. In terms of assembly, interacts with capping enzyme RAP94/OPG109, the two large RNA polymerase subunits RPO147/OPG105 and RPO132/OPG151, the two early transcription factor subunits OPG185 and OPG133, one of the capping enzyme subunits OPG113, the nucleoside triphosphate phosphohydrolase OPG123, two core proteins OPG129 and OPG138, and a virion protein OPG064.

The protein localises to the virion. It is found in the host cytoplasm. The protein resides in the host nucleus. Functionally, plays a role in the maturation of immature virions to infectious particles. May also participate in viral transcription. This chain is Protein OPG146 (OPG146), found in Variola virus (isolate Human/India/Ind3/1967) (VARV).